Reading from the N-terminus, the 622-residue chain is Low affinity potassium transport system protein Kup (622 aa).

12 consecutive transmembrane segments (helical) span residues 9 to 29 (LSAV…TSPL), 46 to 66 (PDVV…VVSV), 101 to 121 (ILVV…VITP), 137 to 157 (PALD…LFVI), 165 to 185 (VGKL…LLGL), 213 to 233 (VSFF…ALYA), 247 to 267 (WFTV…ALLL), 276 to 296 (PFFL…ATLA), 337 to 357 (IYIP…IIGF), 363 to 383 (LAAA…ILFC), 395 to 415 (FLVV…FSAN), and 416 to 436 (VLKL…MFII).

It belongs to the HAK/KUP transporter (TC 2.A.72) family.

The protein resides in the cell inner membrane. It carries out the reaction K(+)(in) + H(+)(in) = K(+)(out) + H(+)(out). Its function is as follows. Responsible for the low-affinity transport of potassium into the cell. Likely operates as a K(+):H(+) symporter. The protein is Low affinity potassium transport system protein Kup of Yersinia pestis bv. Antiqua (strain Antiqua).